Consider the following 216-residue polypeptide: Uracil phosphoribosyltransferase (216 aa).

5-phospho-alpha-D-ribose 1-diphosphate-binding positions include Arg-85, Arg-110, and 135–143 (DPMVATGYS). Residues Ile-200 and 205–207 (GDA) contribute to the uracil site. Position 206 (Asp-206) interacts with 5-phospho-alpha-D-ribose 1-diphosphate.

This sequence belongs to the UPRTase family. It depends on Mg(2+) as a cofactor.

It catalyses the reaction UMP + diphosphate = 5-phospho-alpha-D-ribose 1-diphosphate + uracil. The protein operates within pyrimidine metabolism; UMP biosynthesis via salvage pathway; UMP from uracil: step 1/1. With respect to regulation, allosterically activated by GTP. Catalyzes the conversion of uracil and 5-phospho-alpha-D-ribose 1-diphosphate (PRPP) to UMP and diphosphate. The polypeptide is Uracil phosphoribosyltransferase (Burkholderia thailandensis (strain ATCC 700388 / DSM 13276 / CCUG 48851 / CIP 106301 / E264)).